The chain runs to 387 residues: 8-amino-7-oxononanoate synthase (387 aa).

Substrate-binding residues include R31 and R38. Residue 118–119 (GY) participates in pyridoxal 5'-phosphate binding. A substrate-binding site is contributed by H143. Residues S191, 216–219 (DDAH), and 236–239 (TLSK) contribute to the pyridoxal 5'-phosphate site. K239 is modified (N6-(pyridoxal phosphate)lysine). T348 serves as a coordination point for substrate.

The protein belongs to the class-II pyridoxal-phosphate-dependent aminotransferase family. BioF subfamily. Homodimer. The cofactor is pyridoxal 5'-phosphate.

The catalysed reaction is 6-carboxyhexanoyl-[ACP] + L-alanine + H(+) = (8S)-8-amino-7-oxononanoate + holo-[ACP] + CO2. It functions in the pathway cofactor biosynthesis; biotin biosynthesis. Its function is as follows. Catalyzes the decarboxylative condensation of pimeloyl-[acyl-carrier protein] and L-alanine to produce 8-amino-7-oxononanoate (AON), [acyl-carrier protein], and carbon dioxide. The chain is 8-amino-7-oxononanoate synthase from Methylorubrum populi (strain ATCC BAA-705 / NCIMB 13946 / BJ001) (Methylobacterium populi).